A 181-amino-acid polypeptide reads, in one-letter code: ATP synthase subunit delta (181 aa).

The protein belongs to the ATPase delta chain family. In terms of assembly, F-type ATPases have 2 components, F(1) - the catalytic core - and F(0) - the membrane proton channel. F(1) has five subunits: alpha(3), beta(3), gamma(1), delta(1), epsilon(1). F(0) has three main subunits: a(1), b(2) and c(10-14). The alpha and beta chains form an alternating ring which encloses part of the gamma chain. F(1) is attached to F(0) by a central stalk formed by the gamma and epsilon chains, while a peripheral stalk is formed by the delta and b chains.

It localises to the cell inner membrane. In terms of biological role, f(1)F(0) ATP synthase produces ATP from ADP in the presence of a proton or sodium gradient. F-type ATPases consist of two structural domains, F(1) containing the extramembraneous catalytic core and F(0) containing the membrane proton channel, linked together by a central stalk and a peripheral stalk. During catalysis, ATP synthesis in the catalytic domain of F(1) is coupled via a rotary mechanism of the central stalk subunits to proton translocation. This protein is part of the stalk that links CF(0) to CF(1). It either transmits conformational changes from CF(0) to CF(1) or is implicated in proton conduction. This is ATP synthase subunit delta from Chlorobium phaeobacteroides (strain DSM 266 / SMG 266 / 2430).